Here is a 279-residue protein sequence, read N- to C-terminus: 3-methyl-2-oxobutanoate hydroxymethyltransferase (279 aa).

Mg(2+) is bound by residues aspartate 44 and aspartate 83. 3-methyl-2-oxobutanoate contacts are provided by residues 44 to 45, aspartate 83, and lysine 113; that span reads DS. Mg(2+) is bound at residue glutamate 115. Glutamate 182 functions as the Proton acceptor in the catalytic mechanism.

Belongs to the PanB family. In terms of assembly, homodecamer; pentamer of dimers. The cofactor is Mg(2+).

Its subcellular location is the cytoplasm. It carries out the reaction 3-methyl-2-oxobutanoate + (6R)-5,10-methylene-5,6,7,8-tetrahydrofolate + H2O = 2-dehydropantoate + (6S)-5,6,7,8-tetrahydrofolate. Its pathway is cofactor biosynthesis; (R)-pantothenate biosynthesis; (R)-pantoate from 3-methyl-2-oxobutanoate: step 1/2. Functionally, catalyzes the reversible reaction in which hydroxymethyl group from 5,10-methylenetetrahydrofolate is transferred onto alpha-ketoisovalerate to form ketopantoate. The chain is 3-methyl-2-oxobutanoate hydroxymethyltransferase from Dehalococcoides mccartyi (strain CBDB1).